Reading from the N-terminus, the 495-residue chain is UDP-N-acetylmuramate--L-alanine ligase (495 aa).

122–128 (GTHGKTT) lines the ATP pocket.

Belongs to the MurCDEF family.

The protein resides in the cytoplasm. The catalysed reaction is UDP-N-acetyl-alpha-D-muramate + L-alanine + ATP = UDP-N-acetyl-alpha-D-muramoyl-L-alanine + ADP + phosphate + H(+). It participates in cell wall biogenesis; peptidoglycan biosynthesis. Its function is as follows. Cell wall formation. The protein is UDP-N-acetylmuramate--L-alanine ligase of Mycobacterium leprae (strain TN).